Reading from the N-terminus, the 605-residue chain is DNA primase (605 aa).

The CHC2-type zinc-finger motif lies at cysteine 38–cysteine 62. One can recognise a Toprim domain in the interval aspartate 260 to glycine 341. Glutamate 266, aspartate 310, and aspartate 312 together coordinate Mg(2+).

Belongs to the DnaG primase family. Monomer. Interacts with DnaB. Zn(2+) is required as a cofactor. The cofactor is Mg(2+).

It carries out the reaction ssDNA + n NTP = ssDNA/pppN(pN)n-1 hybrid + (n-1) diphosphate.. Its function is as follows. RNA polymerase that catalyzes the synthesis of short RNA molecules used as primers for DNA polymerase during DNA replication. This Staphylococcus aureus protein is DNA primase.